Reading from the N-terminus, the 259-residue chain is Proteasome subunit alpha (259 aa).

Residues 233 to 243 show a composition bias toward low complexity; sequence PAAPAAASESA. The disordered stretch occupies residues 233–259; that stretch reads PAAPAAASESAPEPKPDTETKPADPQD. Residues 244–259 show a composition bias toward basic and acidic residues; the sequence is PEPKPDTETKPADPQD.

Belongs to the peptidase T1A family. As to quaternary structure, the 20S proteasome core is composed of 14 alpha and 14 beta subunits that assemble into four stacked heptameric rings, resulting in a barrel-shaped structure. The two inner rings, each composed of seven catalytic beta subunits, are sandwiched by two outer rings, each composed of seven alpha subunits. The catalytic chamber with the active sites is on the inside of the barrel. Has a gated structure, the ends of the cylinder being occluded by the N-termini of the alpha-subunits. Is capped by the proteasome-associated ATPase, ARC.

It localises to the cytoplasm. It functions in the pathway protein degradation; proteasomal Pup-dependent pathway. Its activity is regulated as follows. The formation of the proteasomal ATPase ARC-20S proteasome complex, likely via the docking of the C-termini of ARC into the intersubunit pockets in the alpha-rings, may trigger opening of the gate for substrate entry. Interconversion between the open-gate and close-gate conformations leads to a dynamic regulation of the 20S proteasome proteolysis activity. In terms of biological role, component of the proteasome core, a large protease complex with broad specificity involved in protein degradation. The protein is Proteasome subunit alpha of Rhodococcus opacus (strain B4).